A 480-amino-acid chain; its full sequence is tRNA modification GTPase MnmE (480 aa).

Arginine 20, glutamate 114, and lysine 154 together coordinate (6S)-5-formyl-5,6,7,8-tetrahydrofolate. Residues 250–406 form the TrmE-type G domain; the sequence is GLKLAIIGPP…ILKNIENIAE (157 aa). Asparagine 260 contacts K(+). Residues 260-265, 279-285, and 304-307 contribute to the GTP site; these read NVGKSS, SNIAGTT, and DTAG. Serine 264 is a Mg(2+) binding site. K(+)-binding residues include serine 279, isoleucine 281, and threonine 284. Threonine 285 contacts Mg(2+). Lysine 480 is a (6S)-5-formyl-5,6,7,8-tetrahydrofolate binding site.

This sequence belongs to the TRAFAC class TrmE-Era-EngA-EngB-Septin-like GTPase superfamily. TrmE GTPase family. As to quaternary structure, homodimer. Heterotetramer of two MnmE and two MnmG subunits. K(+) is required as a cofactor.

The protein resides in the cytoplasm. Functionally, exhibits a very high intrinsic GTPase hydrolysis rate. Involved in the addition of a carboxymethylaminomethyl (cmnm) group at the wobble position (U34) of certain tRNAs, forming tRNA-cmnm(5)s(2)U34. The polypeptide is tRNA modification GTPase MnmE (Rickettsia felis (strain ATCC VR-1525 / URRWXCal2) (Rickettsia azadi)).